Here is a 342-residue protein sequence, read N- to C-terminus: S-adenosylmethionine:tRNA ribosyltransferase-isomerase (342 aa).

This sequence belongs to the QueA family. Monomer.

The protein localises to the cytoplasm. The catalysed reaction is 7-aminomethyl-7-carbaguanosine(34) in tRNA + S-adenosyl-L-methionine = epoxyqueuosine(34) in tRNA + adenine + L-methionine + 2 H(+). It functions in the pathway tRNA modification; tRNA-queuosine biosynthesis. Transfers and isomerizes the ribose moiety from AdoMet to the 7-aminomethyl group of 7-deazaguanine (preQ1-tRNA) to give epoxyqueuosine (oQ-tRNA). In Listeria monocytogenes serotype 4b (strain CLIP80459), this protein is S-adenosylmethionine:tRNA ribosyltransferase-isomerase.